A 314-amino-acid chain; its full sequence is Ribosomal protein L11 methyltransferase (314 aa).

4 residues coordinate S-adenosyl-L-methionine: T163, G184, D206, and N248.

Belongs to the methyltransferase superfamily. PrmA family.

The protein resides in the cytoplasm. The enzyme catalyses L-lysyl-[protein] + 3 S-adenosyl-L-methionine = N(6),N(6),N(6)-trimethyl-L-lysyl-[protein] + 3 S-adenosyl-L-homocysteine + 3 H(+). Methylates ribosomal protein L11. The chain is Ribosomal protein L11 methyltransferase from Lactobacillus delbrueckii subsp. bulgaricus (strain ATCC BAA-365 / Lb-18).